Here is a 504-residue protein sequence, read N- to C-terminus: ATP synthase subunit alpha, chloroplastic (504 aa).

170–177 is an ATP binding site; the sequence is GDRQTGKT.

The protein belongs to the ATPase alpha/beta chains family. In terms of assembly, F-type ATPases have 2 components, CF(1) - the catalytic core - and CF(0) - the membrane proton channel. CF(1) has five subunits: alpha(3), beta(3), gamma(1), delta(1), epsilon(1). CF(0) has four main subunits: a, b, b' and c.

It localises to the plastid. Its subcellular location is the chloroplast thylakoid membrane. The catalysed reaction is ATP + H2O + 4 H(+)(in) = ADP + phosphate + 5 H(+)(out). Its function is as follows. Produces ATP from ADP in the presence of a proton gradient across the membrane. The alpha chain is a regulatory subunit. This is ATP synthase subunit alpha, chloroplastic from Porphyra purpurea (Red seaweed).